The primary structure comprises 761 residues: uncharacterized protein (761 aa).

A CR-type zinc finger spans residues 1–84; the sequence is MIVKCPICDG…CGGSGKVVKC (84 aa). Residues 135–200 form the S1 motif domain; sequence GKFYKGVVTR…EKREIDFKYI (66 aa).

This is an uncharacterized protein from Methanocaldococcus jannaschii (strain ATCC 43067 / DSM 2661 / JAL-1 / JCM 10045 / NBRC 100440) (Methanococcus jannaschii).